The following is an 805-amino-acid chain: Ubiquitin carboxyl-terminal hydrolase 10-B (805 aa).

Disordered regions lie at residues 136 to 173 (AIPDGSGNADSDGTSGTGQRERKKKKKRPPGYYSYLEG) and 284 to 305 (DTTENLGVTNGQTLESPEEDTV). Composition is skewed to polar residues over residues 143–153 (NADSDGTSGTG) and 284–298 (DTTENLGVTNGQTLE). One can recognise a USP domain in the interval 422 to 802 (RGLINKGNWC…TAYLLYYRRV (381 aa)). The active-site Nucleophile is the C431. The segment at 573–600 (EEVNKEEQEGSDEEWEQVGPRNKSSVTR) is disordered. Catalysis depends on H756, which acts as the Proton acceptor.

The protein belongs to the peptidase C19 family. USP10 subfamily.

It localises to the cytoplasm. It is found in the nucleus. The catalysed reaction is Thiol-dependent hydrolysis of ester, thioester, amide, peptide and isopeptide bonds formed by the C-terminal Gly of ubiquitin (a 76-residue protein attached to proteins as an intracellular targeting signal).. Functionally, hydrolase that can remove conjugated ubiquitin from target proteins such as p53/tp53, rps2/us5, rps3/us3, rps10/eS10, becn1, snx3 and cftr. Acts as an essential regulator of p53/tp53 stability: in unstressed cells, specifically deubiquitinates p53/tp53 in the cytoplasm, leading to counteracts MDM2 action and stabilize p53/tp53. Following DNA damage, translocates to the nucleus and deubiquitinates p53/tp53, leading to regulate the p53/TP53-dependent DNA damage response. Component of a regulatory loop that controls autophagy and p53/tp53 levels. Plays a key role in 40S ribosome subunit recycling when a ribosome has stalled during translation: acts both by inhibiting formation of stress granules, which store stalled translation pre-initiation complexes, and mediating deubiquitination of 40S ribosome subunits. Deubiquitinates cftr in early endosomes, enhancing its endocytic recycling. This Xenopus laevis (African clawed frog) protein is Ubiquitin carboxyl-terminal hydrolase 10-B (usp10-b).